Consider the following 479-residue polypeptide: Transcript termination protein A18 (479 aa).

Residues 99–255 form the Helicase ATP-binding domain; that stretch reads KNKHKRPTYI…NDIINVSNSL (157 aa). 112–119 contacts ATP; it reads LACGFGKT. A DESH box motif is present at residues 205-208; sequence DESH. Residues 308–469 enclose the Helicase C-terminal domain; sequence ILDTIIYDFN…EKKGKKKELA (162 aa).

The protein belongs to the helicase family. Poxviruses subfamily. As to quaternary structure, interacts with G2. Might be part of a transcription complex composed at least of G2, A18, and H5.

It is found in the virion. Functionally, DNA helicase which seems to act as a postreplicative transcription termination factor. Involved in ATP-dependent release of nascent RNA. Forms a stable complex with single-stranded DNA, and to a lesser extent RNA. The polypeptide is Transcript termination protein A18 (Homo sapiens (Human)).